Reading from the N-terminus, the 164-residue chain is MLCVRSSSSNLESDTYLSRYSTRASAGTGSTYGFGLAGDRGYSSDSSSSSSESKPSNNKNIDFIYNNNAESNLSEYLGKDIPEDLSGFRDTASAPDTQSDVRNCDSIRKYQSLSSAGSGSTYGYGAGGNRGFMDESNESPKEDYINQKKHSKLFLLLYRIFHLI.

Residues 1–29 are compositionally biased toward polar residues; it reads MLCVRSSSSNLESDTYLSRYSTRASAGTG. Residues 1–62 are disordered; the sequence is MLCVRSSSSN…SKPSNNKNID (62 aa). Residues 43–62 show a composition bias toward low complexity; that stretch reads SSDSSSSSSESKPSNNKNID.

This is an uncharacterized protein from Schizosaccharomyces pombe (strain 972 / ATCC 24843) (Fission yeast).